Here is a 264-residue protein sequence, read N- to C-terminus: Glutamate racemase (264 aa).

Substrate is bound by residues 10-11 and 42-43; these read DS and YG. Catalysis depends on cysteine 73, which acts as the Proton donor/acceptor. 74–75 provides a ligand contact to substrate; the sequence is NT. Residue cysteine 183 is the Proton donor/acceptor of the active site. Residue 184–185 coordinates substrate; the sequence is TH.

This sequence belongs to the aspartate/glutamate racemases family. Homodimer.

It catalyses the reaction L-glutamate = D-glutamate. Its pathway is cell wall biogenesis; peptidoglycan biosynthesis. Provides the (R)-glutamate required for cell wall biosynthesis. The polypeptide is Glutamate racemase (Streptococcus pyogenes serotype M1).